A 473-amino-acid chain; its full sequence is ATP synthase subunit beta (473 aa).

Residue 158 to 165 (GGAGVGKT) coordinates ATP.

Belongs to the ATPase alpha/beta chains family. As to quaternary structure, F-type ATPases have 2 components, CF(1) - the catalytic core - and CF(0) - the membrane proton channel. CF(1) has five subunits: alpha(3), beta(3), gamma(1), delta(1), epsilon(1). CF(0) has three main subunits: a(1), b(2) and c(9-12). The alpha and beta chains form an alternating ring which encloses part of the gamma chain. CF(1) is attached to CF(0) by a central stalk formed by the gamma and epsilon chains, while a peripheral stalk is formed by the delta and b chains.

It is found in the cell membrane. The catalysed reaction is ATP + H2O + 4 H(+)(in) = ADP + phosphate + 5 H(+)(out). Produces ATP from ADP in the presence of a proton gradient across the membrane. The catalytic sites are hosted primarily by the beta subunits. This Geobacillus thermodenitrificans (strain NG80-2) protein is ATP synthase subunit beta.